The following is a 378-amino-acid chain: UPF0754 membrane protein SH1116 (378 aa).

Transmembrane regions (helical) follow at residues 4–24 (FLVILFMVVVGAVIGGVTNVI) and 358–378 (SLGFILGGIIGFFQGIVAIFV).

This sequence belongs to the UPF0754 family.

The protein resides in the cell membrane. This chain is UPF0754 membrane protein SH1116, found in Staphylococcus haemolyticus (strain JCSC1435).